A 253-amino-acid polypeptide reads, in one-letter code: 5'-nucleotidase SurE (253 aa).

A divalent metal cation-binding residues include Asp-8, Asp-9, Ser-39, and Asn-95.

Belongs to the SurE nucleotidase family. Requires a divalent metal cation as cofactor.

The protein resides in the cytoplasm. The enzyme catalyses a ribonucleoside 5'-phosphate + H2O = a ribonucleoside + phosphate. Nucleotidase that shows phosphatase activity on nucleoside 5'-monophosphates. In Desulfatibacillum aliphaticivorans, this protein is 5'-nucleotidase SurE.